The primary structure comprises 248 residues: Probable pyridoxal 5'-phosphate synthase subunit pdx2 (248 aa).

Residue 70–72 (GES) coordinates L-glutamine. Catalysis depends on Cys-106, which acts as the Nucleophile. L-glutamine is bound by residues Arg-136 and 174–175 (IR). Active-site charge relay system residues include His-221 and Glu-223.

Belongs to the glutaminase PdxT/SNO family.

The catalysed reaction is aldehydo-D-ribose 5-phosphate + D-glyceraldehyde 3-phosphate + L-glutamine = pyridoxal 5'-phosphate + L-glutamate + phosphate + 3 H2O + H(+). It catalyses the reaction L-glutamine + H2O = L-glutamate + NH4(+). Its pathway is cofactor biosynthesis; pyridoxal 5'-phosphate biosynthesis. In terms of biological role, catalyzes the hydrolysis of glutamine to glutamate and ammonia as part of the biosynthesis of pyridoxal 5'-phosphate. The resulting ammonia molecule is channeled to the active site of pdx1. The protein is Probable pyridoxal 5'-phosphate synthase subunit pdx2 of Dictyostelium discoideum (Social amoeba).